We begin with the raw amino-acid sequence, 845 residues long: Protein P (845 aa).

Residues 1 to 179 form a terminal protein domain (TP) region; the sequence is MPLSYQHFRK…FCGSPYSWEQ (179 aa). A spacer region spans residues 180–348; it reads ELQHGRLVIK…YCLSHLVNLR (169 aa). Residues 226–245 form a disordered region; it reads GLQPHQGPLASSQPGRSGSI. A polymerase/reverse transcriptase domain (RT) region spans residues 349-692; that stretch reads EDWGPCDEHG…YMNLYPVARQ (344 aa). The 244-residue stretch at 359–602 folds into the Reverse transcriptase domain; the sequence is EHHIRIPRTP…YSLNFMGYII (244 aa). Positions 431, 553, and 554 each coordinate Mg(2+).

This sequence belongs to the hepadnaviridae P protein family.

The catalysed reaction is DNA(n) + a 2'-deoxyribonucleoside 5'-triphosphate = DNA(n+1) + diphosphate. It catalyses the reaction Endonucleolytic cleavage to 5'-phosphomonoester.. Its activity is regulated as follows. Activated by host HSP70 and HSP40 in vitro to be able to bind the epsilon loop of the pgRNA. Because deletion of the RNase H region renders the protein partly chaperone-independent, the chaperones may be needed indirectly to relieve occlusion of the RNA-binding site by this domain. Inhibited by several reverse-transcriptase inhibitors: Lamivudine, Adefovir and Entecavir. Multifunctional enzyme that converts the viral RNA genome into dsDNA in viral cytoplasmic capsids. This enzyme displays a DNA polymerase activity that can copy either DNA or RNA templates, and a ribonuclease H (RNase H) activity that cleaves the RNA strand of RNA-DNA heteroduplexes in a partially processive 3'- to 5'-endonucleasic mode. Neo-synthesized pregenomic RNA (pgRNA) are encapsidated together with the P protein, and reverse-transcribed inside the nucleocapsid. Initiation of reverse-transcription occurs first by binding the epsilon loop on the pgRNA genome, and is initiated by protein priming, thereby the 5'-end of (-)DNA is covalently linked to P protein. Partial (+)DNA is synthesized from the (-)DNA template and generates the relaxed circular DNA (RC-DNA) genome. After budding and infection, the RC-DNA migrates in the nucleus, and is converted into a plasmid-like covalently closed circular DNA (cccDNA). The activity of P protein does not seem to be necessary for cccDNA generation, and is presumably released from (+)DNA by host nuclear DNA repair machinery. The chain is Protein P from Homo sapiens (Human).